We begin with the raw amino-acid sequence, 305 residues long: Ornithine carbamoyltransferase (305 aa).

Carbamoyl phosphate contacts are provided by residues 52-55 (STRT), Q79, R103, and 130-133 (HPCQ). L-ornithine-binding positions include N161, D221, and 225-226 (SM). Residues 261–262 (CL) and R289 each bind carbamoyl phosphate.

This sequence belongs to the aspartate/ornithine carbamoyltransferase superfamily. OTCase family.

The protein localises to the cytoplasm. The enzyme catalyses carbamoyl phosphate + L-ornithine = L-citrulline + phosphate + H(+). The protein operates within amino-acid biosynthesis; L-arginine biosynthesis; L-arginine from L-ornithine and carbamoyl phosphate: step 1/3. Its function is as follows. Reversibly catalyzes the transfer of the carbamoyl group from carbamoyl phosphate (CP) to the N(epsilon) atom of ornithine (ORN) to produce L-citrulline. The chain is Ornithine carbamoyltransferase from Methanocorpusculum labreanum (strain ATCC 43576 / DSM 4855 / Z).